Reading from the N-terminus, the 149-residue chain is UPF0310 protein msl3206 (149 aa).

The protein belongs to the UPF0310 family.

The polypeptide is UPF0310 protein msl3206 (Mesorhizobium japonicum (strain LMG 29417 / CECT 9101 / MAFF 303099) (Mesorhizobium loti (strain MAFF 303099))).